Consider the following 454-residue polypeptide: Bifunctional protein GlmU (454 aa).

Residues 1–226 (MALNVVILAA…AIEVEGANNR (226 aa)) form a pyrophosphorylase region. Residues 8–11 (LAAG), K22, Q73, 78–79 (GT), 100–102 (YGD), G137, E151, N166, and N224 contribute to the UDP-N-acetyl-alpha-D-glucosamine site. D102 is a binding site for Mg(2+). N224 contacts Mg(2+). The tract at residues 227 to 247 (VQLAQLERAYQAREAEKLMIA) is linker. Residues 248-454 (GANLRDPSRI…GWQRPVKIKK (207 aa)) are N-acetyltransferase. Positions 330 and 348 each coordinate UDP-N-acetyl-alpha-D-glucosamine. H360 (proton acceptor) is an active-site residue. UDP-N-acetyl-alpha-D-glucosamine-binding residues include Y363 and N374. Acetyl-CoA is bound by residues A377, 383-384 (NY), S402, A420, and R437.

It in the N-terminal section; belongs to the N-acetylglucosamine-1-phosphate uridyltransferase family. In the C-terminal section; belongs to the transferase hexapeptide repeat family. As to quaternary structure, homotrimer. Mg(2+) serves as cofactor.

Its subcellular location is the cytoplasm. It carries out the reaction alpha-D-glucosamine 1-phosphate + acetyl-CoA = N-acetyl-alpha-D-glucosamine 1-phosphate + CoA + H(+). The enzyme catalyses N-acetyl-alpha-D-glucosamine 1-phosphate + UTP + H(+) = UDP-N-acetyl-alpha-D-glucosamine + diphosphate. It participates in nucleotide-sugar biosynthesis; UDP-N-acetyl-alpha-D-glucosamine biosynthesis; N-acetyl-alpha-D-glucosamine 1-phosphate from alpha-D-glucosamine 6-phosphate (route II): step 2/2. It functions in the pathway nucleotide-sugar biosynthesis; UDP-N-acetyl-alpha-D-glucosamine biosynthesis; UDP-N-acetyl-alpha-D-glucosamine from N-acetyl-alpha-D-glucosamine 1-phosphate: step 1/1. The protein operates within bacterial outer membrane biogenesis; LPS lipid A biosynthesis. Functionally, catalyzes the last two sequential reactions in the de novo biosynthetic pathway for UDP-N-acetylglucosamine (UDP-GlcNAc). The C-terminal domain catalyzes the transfer of acetyl group from acetyl coenzyme A to glucosamine-1-phosphate (GlcN-1-P) to produce N-acetylglucosamine-1-phosphate (GlcNAc-1-P), which is converted into UDP-GlcNAc by the transfer of uridine 5-monophosphate (from uridine 5-triphosphate), a reaction catalyzed by the N-terminal domain. This is Bifunctional protein GlmU from Shewanella oneidensis (strain ATCC 700550 / JCM 31522 / CIP 106686 / LMG 19005 / NCIMB 14063 / MR-1).